Consider the following 414-residue polypeptide: FAD-dependent monooxygenase adaC (414 aa).

5 residues coordinate FAD: Glu-32, Ala-43, Arg-115, Asp-325, and Gly-338.

This sequence belongs to the paxM FAD-dependent monooxygenase family. The cofactor is FAD.

It carries out the reaction 3-(2,4-dioxopentyl)-3,6,8,9-tetrahydroxy-1-oxo-1,2,3,4-tetrahydroanthracene-2-carboxyl-[ACP] + NADPH + O2 + H(+) = 3-(2,4-dioxopentyl)-2,3,6,8,9-pentahydroxy-1-oxo-1,2,3,4-tetrahydroanthracene-2-carboxyl-[ACP] + NADP(+) + H2O. It participates in secondary metabolite biosynthesis. In terms of biological role, FAD-dependent monooxygenase; part of the gene cluster that mediates the biosynthesis of the linear tetracyclic TAN-1612 neuropeptide Y receptor antagonist. The decaketide backbone of TAN-1612 is synthesized by the non-reducing polyketide synthase adaA via condensation of one acetyl-CoA starter unit with 9 malonyl-CoA units. The FAD-dependent monooxygenase adaC then performs hydroxylation at C2 while the polaketide chain is still attached to the NRPKS adaA. The alpha-hydroxylation step at C2 appears to be crucial for the following C18-C1 Claisen cyclization and release of the C9-hydroxyl version of TAN-1612 from the NRPKS adaA, two steps performed by the lactamase-like protein adaB. Finally, the O-methyltransferase adaD performs the C9 O-methylation to complete the biosynthesis of TAN-1612. The polypeptide is FAD-dependent monooxygenase adaC (Aspergillus niger).